Here is a 160-residue protein sequence, read N- to C-terminus: UPF0178 protein BPP1051 (160 aa).

Belongs to the UPF0178 family.

The sequence is that of UPF0178 protein BPP1051 from Bordetella parapertussis (strain 12822 / ATCC BAA-587 / NCTC 13253).